A 188-amino-acid polypeptide reads, in one-letter code: Probable RNA-binding protein 18 (188 aa).

Residues histidine 23–alanine 104 enclose the RRM domain. The interval glutamate 151–arginine 188 is disordered. The segment covering glutamine 177–arginine 188 has biased composition (basic residues).

The sequence is that of Probable RNA-binding protein 18 (rbm18) from Danio rerio (Zebrafish).